The sequence spans 213 residues: Probable nicotinate-nucleotide adenylyltransferase (213 aa).

It belongs to the NadD family.

It carries out the reaction nicotinate beta-D-ribonucleotide + ATP + H(+) = deamido-NAD(+) + diphosphate. It participates in cofactor biosynthesis; NAD(+) biosynthesis; deamido-NAD(+) from nicotinate D-ribonucleotide: step 1/1. In terms of biological role, catalyzes the reversible adenylation of nicotinate mononucleotide (NaMN) to nicotinic acid adenine dinucleotide (NaAD). The protein is Probable nicotinate-nucleotide adenylyltransferase of Ruegeria pomeroyi (strain ATCC 700808 / DSM 15171 / DSS-3) (Silicibacter pomeroyi).